A 312-amino-acid polypeptide reads, in one-letter code: Putative mitochondrial transporter UCP3 (312 aa).

Over 1-10 the chain is Mitochondrial intermembrane; that stretch reads MVGLKPSDVP. Residues 11-32 traverse the membrane as a helical segment; it reads PTMAVKFLGAGTAACFADLVTF. 3 Solcar repeats span residues 11–105, 114–206, and 215–300; these read PTMA…VKQV, SSLT…LKEK, and DNFP…LKRA. Residues 33–76 lie on the Mitochondrial matrix side of the membrane; sequence PLDTAKVRLQIQGENQAVQTARLVQYRGVLGTILTMVRTEGPCS. A helical transmembrane segment spans residues 77–99; the sequence is PYNGLVAGLQRQMSFASIRIGLY. Over 100–119 the chain is Mitochondrial intermembrane; the sequence is DSVKQVYTPKGADNSSLTTR. A helical transmembrane segment spans residues 120–136; it reads ILAGCTTGAMAVTCAQP. Residues 137–183 lie on the Mitochondrial matrix side of the membrane; the sequence is TDVVKVRFQASIHLGPSRSDRKYSGTMDAYRTIAREEGVRGLWKGTL. A helical transmembrane segment spans residues 184 to 200; the sequence is PNIMRNAIVNCAEVVTY. Topologically, residues 201 to 217 are mitochondrial intermembrane; it reads DILKEKLLDYHLLTDNF. A helical transmembrane segment spans residues 218–237; it reads PCHFVSAFGAGFCATVVASP. At 238-271 the chain is on the mitochondrial matrix side; sequence VDVVKTRYMNSPPGQYFSPLDCMIKMVAQEGPTA. The chain crosses the membrane as a helical span at residues 272–294; the sequence is FYKGFTPSFLRLGSWNVVMFVTY. The segment at 279–301 is purine nucleotide binding; it reads SFLRLGSWNVVMFVTYEQLKRAL. At 295-312 the chain is on the mitochondrial intermembrane side; the sequence is EQLKRALMKVQMLRESPF.

The protein belongs to the mitochondrial carrier (TC 2.A.29) family. As to quaternary structure, interacts with HAX1; the interaction is direct and calcium-dependent. In terms of tissue distribution, only in skeletal muscle and heart. Also expressed in white and brown adipose tissues. Is more expressed in glycolytic than in oxidative skeletal muscles.

It localises to the mitochondrion inner membrane. The proton transporter activity is activated by fatty acids (in vitro). The proton transporter activity is inhibited by ATP and ADP (in vitro). The effect of Ubiquinone/coenzyme Q10 on the proton transporter activity in reconstituted membranes is unclear (in vitro). Its function is as follows. Putative transmembrane transporter that plays a role in mitochondrial metabolism via an as yet unclear mechanism. Originally, this mitochondrial protein was thought to act as a proton transmembrane transporter from the mitochondrial intermembrane space into the matrix, causing proton leaks through the inner mitochondrial membrane, thereby uncoupling mitochondrial membrane potential generation from ATP synthesis. However, this function is controversial and uncoupling may not be the function, or at least not the main function, but rather a consequence of more conventional metabolite transporter activity. The polypeptide is Putative mitochondrial transporter UCP3 (Homo sapiens (Human)).